Reading from the N-terminus, the 246-residue chain is DNA repair protein RecO (246 aa).

This sequence belongs to the RecO family.

Functionally, involved in DNA repair and RecF pathway recombination. In Methylorubrum populi (strain ATCC BAA-705 / NCIMB 13946 / BJ001) (Methylobacterium populi), this protein is DNA repair protein RecO.